The primary structure comprises 134 residues: uncharacterized protein (134 aa).

The N-terminal stretch at 1–23 is a signal peptide; that stretch reads MWHLRCSNWRGSGVFGMCFSLSG. C24 carries N-palmitoyl cysteine lipidation. C24 is lipidated: S-diacylglycerol cysteine.

The protein resides in the cell membrane. This is an uncharacterized protein from Treponema pallidum (strain Nichols).